The sequence spans 433 residues: Tol-Pal system protein TolB (433 aa).

The first 21 residues, 1–21 (MRNLLRGMLVVICCMAGIAAA), serve as a signal peptide directing secretion.

Belongs to the TolB family. As to quaternary structure, the Tol-Pal system is composed of five core proteins: the inner membrane proteins TolA, TolQ and TolR, the periplasmic protein TolB and the outer membrane protein Pal. They form a network linking the inner and outer membranes and the peptidoglycan layer.

It localises to the periplasm. Its function is as follows. Part of the Tol-Pal system, which plays a role in outer membrane invagination during cell division and is important for maintaining outer membrane integrity. This Pseudomonas fluorescens (strain SBW25) protein is Tol-Pal system protein TolB.